Reading from the N-terminus, the 545-residue chain is Pectinesterase/pectinesterase inhibitor (545 aa).

The N-terminal stretch at 1–37 (MEINQPNLLEASKSCYSKITFFLLVISFAALVSTGFS) is a signal peptide. The segment at 38-191 (SPELSLHHKI…ILRARTSLAI (154 aa)) is pectinesterase inhibitor. Residues 38–228 (SPELSLHHKI…RRLLQTLGKD (191 aa)) constitute a propeptide that is removed on maturation. An N-linked (GlcNAc...) asparagine glycan is attached at asparagine 135. The pectinesterase stretch occupies residues 232–530 (DIVVAKDGSG…TVAELIQGGS (299 aa)). Substrate is bound by residues threonine 307 and glutamine 337. Cysteine 326 and cysteine 353 are oxidised to a cystine. Aspartate 360 functions as the Proton donor; for pectinesterase activity in the catalytic mechanism. A glycan (N-linked (GlcNAc...) (complex) asparagine) is linked at asparagine 375. Aspartate 381 serves as the catalytic Nucleophile; for pectinesterase activity. Cysteine 394 and cysteine 428 are joined by a disulfide. Residues arginine 449 and tryptophan 451 each contribute to the substrate site.

This sequence in the N-terminal section; belongs to the PMEI family. The protein in the C-terminal section; belongs to the pectinesterase family. In terms of processing, N-glycosylated.

The protein localises to the secreted. Its subcellular location is the cell wall. It carries out the reaction [(1-&gt;4)-alpha-D-galacturonosyl methyl ester](n) + n H2O = [(1-&gt;4)-alpha-D-galacturonosyl](n) + n methanol + n H(+). It functions in the pathway glycan metabolism; pectin degradation; 2-dehydro-3-deoxy-D-gluconate from pectin: step 1/5. Functionally, acts in the modification of cell walls via demethylesterification of cell wall pectin. The chain is Pectinesterase/pectinesterase inhibitor from Ficus pumila var. awkeotsang (Jelly fig).